The chain runs to 129 residues: Large ribosomal subunit protein bL19 (129 aa).

Functionally, this protein is located at the 30S-50S ribosomal subunit interface and may play a role in the structure and function of the aminoacyl-tRNA binding site. In Rhodopseudomonas palustris (strain ATCC BAA-98 / CGA009), this protein is Large ribosomal subunit protein bL19.